The following is a 132-amino-acid chain: Small ribosomal subunit protein uS11 (132 aa).

This sequence belongs to the universal ribosomal protein uS11 family. As to quaternary structure, part of the 30S ribosomal subunit. Interacts with proteins S7 and S18. Binds to IF-3.

Its function is as follows. Located on the platform of the 30S subunit, it bridges several disparate RNA helices of the 16S rRNA. Forms part of the Shine-Dalgarno cleft in the 70S ribosome. The protein is Small ribosomal subunit protein uS11 of Clostridioides difficile (strain 630) (Peptoclostridium difficile).